The chain runs to 657 residues: Penicillin-binding protein activator LpoA (657 aa).

A signal peptide spans 1–25 (MLSSTFVRSKAGLVPVILAALILAA). C26 is lipidated: N-palmitoyl cysteine. Residue C26 is the site of S-diacylglycerol cysteine attachment.

This sequence belongs to the LpoA family. Interacts with PBP1a.

Its subcellular location is the cell outer membrane. Its function is as follows. Regulator of peptidoglycan synthesis that is essential for the function of penicillin-binding protein 1A (PBP1a). The protein is Penicillin-binding protein activator LpoA of Yersinia pseudotuberculosis serotype O:1b (strain IP 31758).